The primary structure comprises 179 residues: Large ribosomal subunit protein uL5 (179 aa).

It belongs to the universal ribosomal protein uL5 family. In terms of assembly, part of the 50S ribosomal subunit; part of the 5S rRNA/L5/L18/L25 subcomplex. Contacts the 5S rRNA and the P site tRNA. Forms a bridge to the 30S subunit in the 70S ribosome.

Its function is as follows. This is one of the proteins that bind and probably mediate the attachment of the 5S RNA into the large ribosomal subunit, where it forms part of the central protuberance. In the 70S ribosome it contacts protein S13 of the 30S subunit (bridge B1b), connecting the 2 subunits; this bridge is implicated in subunit movement. Contacts the P site tRNA; the 5S rRNA and some of its associated proteins might help stabilize positioning of ribosome-bound tRNAs. In Alcanivorax borkumensis (strain ATCC 700651 / DSM 11573 / NCIMB 13689 / SK2), this protein is Large ribosomal subunit protein uL5.